The following is an 806-amino-acid chain: Fibroblast growth factor receptor 3 (806 aa).

The N-terminal stretch at Met-1–Ala-19 is a signal peptide. Topologically, residues Leu-20–Ser-364 are extracellular. An Ig-like C2-type 1 domain is found at Arg-24 to Thr-124. A disulfide bond links Cys-61 and Cys-107. N-linked (GlcNAc...) asparagine glycans are attached at residues Asn-83, Asn-96, and Asn-118. The tract at residues Val-121–Phe-146 is disordered. Over residues Gly-130–Asp-141 the composition is skewed to acidic residues. 2 Ig-like C2-type domains span residues Pro-150–Asp-238 and Pro-247–Thr-349. The cysteines at positions 170 and 222 are disulfide-linked. 5 N-linked (GlcNAc...) asparagine glycosylation sites follow: Asn-219, Asn-256, Asn-288, Asn-309, and Asn-322. Cys-269 and Cys-333 are joined by a disulfide. Residues Val-365–Cys-389 form a helical membrane-spanning segment. The Cytoplasmic segment spans residues Arg-390–Thr-806. In terms of domain architecture, Protein kinase spans Leu-466 to Leu-755. Residues Leu-472–Val-480 and Lys-502 each bind ATP. Asp-611 (proton acceptor) is an active-site residue. Phosphotyrosine; by autocatalysis occurs at positions 641, 642, 718, and 754.

The protein belongs to the protein kinase superfamily. Tyr protein kinase family. Fibroblast growth factor receptor subfamily. As to quaternary structure, monomer. Homodimer after ligand binding. Autophosphorylated. Binding of FGF family members together with heparan sulfate proteoglycan or heparin promotes receptor dimerization and autophosphorylation on tyrosine residues. Autophosphorylation occurs in trans between the two FGFR molecules present in the dimer.

The protein localises to the cell membrane. The catalysed reaction is L-tyrosyl-[protein] + ATP = O-phospho-L-tyrosyl-[protein] + ADP + H(+). With respect to regulation, present in an inactive conformation in the absence of bound ligand. Ligand binding leads to dimerization and activation by autophosphorylation on tyrosine residues. Its function is as follows. Tyrosine-protein kinase that acts as a cell-surface receptor for fibroblast growth factors and plays an essential role in the regulation of cell proliferation, differentiation and apoptosis. Plays an essential role in the regulation of chondrocyte differentiation, proliferation and apoptosis, and is required for normal skeleton development. Regulates both osteogenesis and postnatal bone mineralization by osteoblasts. Promotes apoptosis in chondrocytes, but can also promote cancer cell proliferation. Phosphorylates PLCG1, CBL and FRS2. Ligand binding leads to the activation of several signaling cascades. Activation of PLCG1 leads to the production of the cellular signaling molecules diacylglycerol and inositol 1,4,5-trisphosphate. Phosphorylation of FRS2 triggers recruitment of GRB2, GAB1, PIK3R1 and SOS1, and mediates activation of RAS, MAPK1/ERK2, MAPK3/ERK1 and the MAP kinase signaling pathway, as well as of the AKT1 signaling pathway. This is Fibroblast growth factor receptor 3 (FGFR3) from Gallus gallus (Chicken).